We begin with the raw amino-acid sequence, 559 residues long: Glucose-6-phosphate isomerase (559 aa).

The Proton donor role is filled by Glu352. Residues His383 and Lys511 contribute to the active site.

It belongs to the GPI family.

The protein resides in the cytoplasm. It catalyses the reaction alpha-D-glucose 6-phosphate = beta-D-fructose 6-phosphate. The protein operates within carbohydrate biosynthesis; gluconeogenesis. It participates in carbohydrate degradation; glycolysis; D-glyceraldehyde 3-phosphate and glycerone phosphate from D-glucose: step 2/4. Functionally, catalyzes the reversible isomerization of glucose-6-phosphate to fructose-6-phosphate. This chain is Glucose-6-phosphate isomerase, found in Chlorobaculum tepidum (strain ATCC 49652 / DSM 12025 / NBRC 103806 / TLS) (Chlorobium tepidum).